The sequence spans 62 residues: Large ribosomal subunit protein bL28 (62 aa).

This sequence belongs to the bacterial ribosomal protein bL28 family.

In Streptococcus uberis (strain ATCC BAA-854 / 0140J), this protein is Large ribosomal subunit protein bL28.